A 239-amino-acid polypeptide reads, in one-letter code: Uridylate kinase (239 aa).

Residue 10–13 (KLSG) participates in ATP binding. Residues 18-23 (GEQGYG) are involved in allosteric activation by GTP. Glycine 52 provides a ligand contact to UMP. 2 residues coordinate ATP: glycine 53 and arginine 57. UMP contacts are provided by residues aspartate 72 and 133–140 (TGNPYFST). ATP is bound by residues asparagine 161, tyrosine 167, and glutamate 170.

It belongs to the UMP kinase family. In terms of assembly, homohexamer.

It localises to the cytoplasm. It catalyses the reaction UMP + ATP = UDP + ADP. It functions in the pathway pyrimidine metabolism; CTP biosynthesis via de novo pathway; UDP from UMP (UMPK route): step 1/1. Allosterically activated by GTP. Inhibited by UTP. Catalyzes the reversible phosphorylation of UMP to UDP. The sequence is that of Uridylate kinase from Halalkalibacterium halodurans (strain ATCC BAA-125 / DSM 18197 / FERM 7344 / JCM 9153 / C-125) (Bacillus halodurans).